The primary structure comprises 527 residues: GMP synthase [glutamine-hydrolyzing] (527 aa).

Positions 11–209 constitute a Glutamine amidotransferase type-1 domain; that stretch reads RILILDFGSQ…VLNICGCENL (199 aa). Cysteine 88 acts as the Nucleophile in catalysis. Active-site residues include histidine 183 and glutamate 185. One can recognise a GMPS ATP-PPase domain in the interval 210-402; the sequence is WTSANIIEDA…LGLPYNMLYR (193 aa). 237 to 243 serves as a coordination point for ATP; sequence SGGVDSS.

Homodimer.

It carries out the reaction XMP + L-glutamine + ATP + H2O = GMP + L-glutamate + AMP + diphosphate + 2 H(+). It functions in the pathway purine metabolism; GMP biosynthesis; GMP from XMP (L-Gln route): step 1/1. Functionally, catalyzes the synthesis of GMP from XMP. The protein is GMP synthase [glutamine-hydrolyzing] of Photobacterium profundum (strain SS9).